The following is a 370-amino-acid chain: 1-propanol dehydrogenase PduQ (370 aa).

It belongs to the iron-containing alcohol dehydrogenase family. In terms of assembly, interacts with PduP, probably via the N-terminus of PduQ. Fe cation serves as cofactor.

It localises to the bacterial microcompartment. It catalyses the reaction 1-propanol + NAD(+) = propanal + NADH + H(+). Its pathway is polyol metabolism; 1,2-propanediol degradation. Its activity is regulated as follows. Enzyme is oxygen sensitive. Its function is as follows. An iron-dependent alcohol dehydrogenase required for optimal 1,2-propanediol (1,2-PD) degradation. NAD(+) and NADH are regenerated internally within the bacterial microcompartment (BMC) dedicated to 1,2-PD degradation by the PduP and PduQ enzymes, which reduce NAD(+) and oxidize NADH respectively, although there must also be cofactor transport across the BMC. The 1,2-PD-specific bacterial microcompartment (BMC) concentrates low levels of 1,2-PD catabolic enzymes, concentrates volatile reaction intermediates thus enhancing pathway flux and keeps the level of toxic, mutagenic propionaldehyde low. This Salmonella typhimurium (strain LT2 / SGSC1412 / ATCC 700720) protein is 1-propanol dehydrogenase PduQ.